The following is a 353-amino-acid chain: D-alanine--D-alanine ligase A (353 aa).

In terms of domain architecture, ATP-grasp spans 141–346; sequence KRLVNEAGLS…YPEIINRLVA (206 aa). ATP is bound at residue 169-224; it reads EQALGLPIFIKPARQGSSVGVHKVVTEADYQAAMSDGFIYDDKLLAEEFIQAREVE. Asp-300, Glu-313, and Asn-315 together coordinate Mg(2+).

It belongs to the D-alanine--D-alanine ligase family. Mg(2+) serves as cofactor. The cofactor is Mn(2+).

The protein resides in the cytoplasm. It carries out the reaction 2 D-alanine + ATP = D-alanyl-D-alanine + ADP + phosphate + H(+). It participates in cell wall biogenesis; peptidoglycan biosynthesis. In terms of biological role, cell wall formation. The sequence is that of D-alanine--D-alanine ligase A from Brucella melitensis biotype 1 (strain ATCC 23456 / CCUG 17765 / NCTC 10094 / 16M).